Consider the following 786-residue polypeptide: Endonuclease MutS2 (786 aa).

333–340 (GPNTGGKT) lines the ATP pocket. Residues 711–786 (LDLRGERYDQ…GSGATIVNFK (76 aa)) enclose the Smr domain.

It belongs to the DNA mismatch repair MutS family. MutS2 subfamily. As to quaternary structure, homodimer. Binds to stalled ribosomes, contacting rRNA.

Endonuclease that is involved in the suppression of homologous recombination and thus may have a key role in the control of bacterial genetic diversity. Functionally, acts as a ribosome collision sensor, splitting the ribosome into its 2 subunits. Detects stalled/collided 70S ribosomes which it binds and splits by an ATP-hydrolysis driven conformational change. Acts upstream of the ribosome quality control system (RQC), a ribosome-associated complex that mediates the extraction of incompletely synthesized nascent chains from stalled ribosomes and their subsequent degradation. Probably generates substrates for RQC. This Lacticaseibacillus paracasei (strain ATCC 334 / BCRC 17002 / CCUG 31169 / CIP 107868 / KCTC 3260 / NRRL B-441) (Lactobacillus paracasei) protein is Endonuclease MutS2.